A 140-amino-acid polypeptide reads, in one-letter code: Nucleoside diphosphate kinase (140 aa).

Residues Lys-11, Phe-59, Arg-87, Thr-93, Arg-104, and Asn-114 each coordinate ATP. His-117 (pros-phosphohistidine intermediate) is an active-site residue.

Belongs to the NDK family. Requires Mg(2+) as cofactor.

Its subcellular location is the cytoplasm. It catalyses the reaction a 2'-deoxyribonucleoside 5'-diphosphate + ATP = a 2'-deoxyribonucleoside 5'-triphosphate + ADP. The enzyme catalyses a ribonucleoside 5'-diphosphate + ATP = a ribonucleoside 5'-triphosphate + ADP. Its function is as follows. Major role in the synthesis of nucleoside triphosphates other than ATP. The ATP gamma phosphate is transferred to the NDP beta phosphate via a ping-pong mechanism, using a phosphorylated active-site intermediate. The chain is Nucleoside diphosphate kinase from Metallosphaera sedula (strain ATCC 51363 / DSM 5348 / JCM 9185 / NBRC 15509 / TH2).